The following is a 661-amino-acid chain: UvrABC system protein B (661 aa).

The 387-residue stretch at 28 to 414 (DGVNERKRHQ…HTDEMVEQII (387 aa)) folds into the Helicase ATP-binding domain. 41 to 48 (GATGTGKT) is an ATP binding site. Residues 94–117 (YYDYYQPEAYVPSTDTFIEKDASI) carry the Beta-hairpin motif. Residues 432–598 (QIDDLLSEIQ…TINKKIHDVI (167 aa)) enclose the Helicase C-terminal domain. A disordered region spans residues 603-624 (ESDETNQQQQTELPKKMTKKER). Positions 625-660 (QKTIENIEKEMKKAAKDLDFEKATELRDMLFELKAE) constitute a UVR domain.

The protein belongs to the UvrB family. Forms a heterotetramer with UvrA during the search for lesions. Interacts with UvrC in an incision complex.

Its subcellular location is the cytoplasm. Functionally, the UvrABC repair system catalyzes the recognition and processing of DNA lesions. A damage recognition complex composed of 2 UvrA and 2 UvrB subunits scans DNA for abnormalities. Upon binding of the UvrA(2)B(2) complex to a putative damaged site, the DNA wraps around one UvrB monomer. DNA wrap is dependent on ATP binding by UvrB and probably causes local melting of the DNA helix, facilitating insertion of UvrB beta-hairpin between the DNA strands. Then UvrB probes one DNA strand for the presence of a lesion. If a lesion is found the UvrA subunits dissociate and the UvrB-DNA preincision complex is formed. This complex is subsequently bound by UvrC and the second UvrB is released. If no lesion is found, the DNA wraps around the other UvrB subunit that will check the other stand for damage. In Staphylococcus epidermidis (strain ATCC 12228 / FDA PCI 1200), this protein is UvrABC system protein B.